A 321-amino-acid chain; its full sequence is Mas-related G-protein coupled receptor member D (321 aa).

Residues 1-33 (MNQTLNSSGTVESALNYSRGSTVHTAYLVLSSL) are Extracellular-facing. Asparagine 2, asparagine 6, and asparagine 16 each carry an N-linked (GlcNAc...) asparagine glycan. A helical membrane pass occupies residues 34–54 (AMFTCLCGMAGNSMVIWLLGF). At 55–59 (RMHRN) the chain is on the cytoplasmic side. Residues 60-80 (PFCIYILNLAAADLLFLFSMA) form a helical membrane-spanning segment. Over 81 to 112 (STLSLETQPLVNTTDKVHELMKRLMYFAYTVG) the chain is Extracellular. Asparagine 92 carries an N-linked (GlcNAc...) asparagine glycan. The helical transmembrane segment at 113–133 (LSLLTAISTQRCLSVLFPIWF) threads the bilayer. Residues 134-142 (KCHRPRHLS) are Cytoplasmic-facing. A helical membrane pass occupies residues 143 to 163 (AWVCGLLWTLCLLMNGLTSSF). At 164–184 (CSKFLKFNEDRCFRVDMVQAA) the chain is on the extracellular side. Residues 185 to 205 (LIMGVLTPVMTLSSLTLFVWV) form a helical membrane-spanning segment. The Cytoplasmic portion of the chain corresponds to 206-218 (RRSSQQWRRQPTR). The chain crosses the membrane as a helical span at residues 219-239 (LFVVVLASVLVFLICSLPLSI). The Extracellular segment spans residues 240–257 (YWFVLYWLSLPPEMQVLC). A helical transmembrane segment spans residues 258 to 280 (FSLSRLSSSVSSSANPVIYFLVG). Over 281-321 (SRRSHRLPTRSLGTVLQQALREEPELEGGETPTVGTNEMGA) the chain is Cytoplasmic. Residues 302 to 321 (EEPELEGGETPTVGTNEMGA) form a disordered region.

It belongs to the G-protein coupled receptor 1 family. Mas subfamily.

It is found in the cell membrane. Its function is as follows. May regulate nociceptor function and/or development, including the sensation or modulation of pain. Functions as a specific membrane receptor for beta-alanine. Beta-alanine at micromolar doses specifically evoked Ca(2+) influx in cells expressing the receptor. Beta-alanine decreases forskolin-stimulated cAMP production in cells expressing the receptor, suggesting that the receptor couples with G-protein G(q) and G(i). This Homo sapiens (Human) protein is Mas-related G-protein coupled receptor member D (MRGPRD).